Here is a 128-residue protein sequence, read N- to C-terminus: Orchestin (128 aa).

Residues 1 to 20 (MNKVFIIGVCLFIVSQAVLA) form the signal peptide. The tract at residues 23-95 (WDSDESSDER…DEDSDDSQES (73 aa)) is disordered. Composition is skewed to basic and acidic residues over residues 30-49 (DERL…KLVV) and 56-81 (EDSN…RKLS). The segment covering 84–93 (TSDEDSDDSQ) has biased composition (acidic residues).

In terms of processing, phosphorylated on Ser and Tyr residues. Calcium-binding activity is dependent on serine phosphorylation but not on tyrosine phosphorylation. Posterior caeca epithelium of the gut.

The protein localises to the secreted. In terms of biological role, plays a role in cuticle calcification. May induce precipitation of the calcium stored in the posterior caeca as calcium carbonate. This Cryptorchestia cavimana (Amphipod) protein is Orchestin.